The sequence spans 195 residues: Envelope glycoprotein L (195 aa).

An N-terminal signal peptide occupies residues 1 to 25 (MKIYRVLVHLSFVLGMFTKTNTVLA). An interaction with gH region spans residues 28-157 (KYDLVHGFMR…LIAPADISCY (130 aa)). A gL alphaherpesvirus-type domain is found at 28-195 (KYDLVHGFMR…TTSGSRRANA (168 aa)). Intrachain disulfides connect cysteine 49–cysteine 78 and cysteine 156–cysteine 178.

This sequence belongs to the herpesviridae glycoprotein L (gL) family. Alphaherpesvirinae gL subfamily. As to quaternary structure, interacts with glycoprotein H (gH); this interaction is necessary for the correct processing and cell surface expression of gH. The heterodimer gH/gL seems to interact with gB trimers during fusion.

Its subcellular location is the virion membrane. The protein resides in the host cell membrane. It localises to the host Golgi apparatus. It is found in the host trans-Golgi network. The heterodimer glycoprotein H-glycoprotein L is required for the fusion of viral and plasma membranes leading to virus entry into the host cell. Acts as a functional inhibitor of gH and maintains gH in an inhibited form. Upon binding to host integrins, gL dissociates from gH leading to activation of the viral fusion glycoproteins gB and gH. The protein is Envelope glycoprotein L of Gallus gallus (Chicken).